The sequence spans 133 residues: ATP synthase epsilon chain (133 aa).

It belongs to the ATPase epsilon chain family. In terms of assembly, F-type ATPases have 2 components, CF(1) - the catalytic core - and CF(0) - the membrane proton channel. CF(1) has five subunits: alpha(3), beta(3), gamma(1), delta(1), epsilon(1). CF(0) has three main subunits: a, b and c.

Its subcellular location is the cell inner membrane. Produces ATP from ADP in the presence of a proton gradient across the membrane. The protein is ATP synthase epsilon chain of Desulfosudis oleivorans (strain DSM 6200 / JCM 39069 / Hxd3) (Desulfococcus oleovorans).